The primary structure comprises 376 residues: uncharacterized protein (376 aa).

The next 2 helical transmembrane spans lie at 153 to 173 (QGTL…VLFA) and 188 to 208 (HRPF…LAVY).

The protein resides in the membrane. This is an uncharacterized protein from Saccharomyces cerevisiae (strain ATCC 204508 / S288c) (Baker's yeast).